The primary structure comprises 299 residues: Prohibitin-2 (299 aa).

Ala-2 carries the post-translational modification N-acetylalanine. The necessary for transcriptional repression stretch occupies residues 19-49; sequence MGTALKLLLGAGAVAYGIRESVFTVEGGHRA. Tyr-128 carries the post-translational modification Phosphotyrosine. Lys-147 carries the N6-acetyllysine modification. A necessary for transcriptional repression region spans residues 150–174; the sequence is ASQLITQRAQVSLLIRRELTERAKD. Ser-151 carries the post-translational modification Phosphoserine. The stretch at 190-238 forms a coiled coil; that stretch reads SREYTAAVEAKQVAQQEAQRAQFLVEKAKQEQRQKIVQAEGEAEAARML. N6-acetyllysine is present on residues Lys-200, Lys-250, and Lys-262.

Belongs to the prohibitin family. In terms of assembly, the mitochondrial prohibitin complex consists of two subunits (PHB1 and PHB2), assembled into a membrane-associated ring-shaped supercomplex of approximately 1 mDa. Interacts with ESR1, HDAC1 and HDAC5. Interacts with ZNF703. Interacts with STOML2. Interacts with ARFGEF3. Interacts with SPHK2. Interacts with COX4I1; the interaction associates PHB2 with COX. Interacts with MAP1LC3B (membrane-bound form LC3-II); the interaction is direct and upon mitochondrial depolarization and proteasome-dependent outer membrane rupture. Interacts with IGFBP6 (via C-terminal domain). Interacts with CLPB. Interacts with CD86 (via cytoplasmic domain); the interactions increases after priming with CD40. Interacts with AFG3L2. Interacts with DNAJC19. Interacts with AKT2; this interaction may be important for myogenic differentiation. Phosphorylated. Tyrosine phosphorylation is indirectly stimulated by IGFBP6.

It localises to the mitochondrion inner membrane. Its subcellular location is the cytoplasm. The protein localises to the nucleus. The protein resides in the cell membrane. Protein with pleiotropic attributes mediated in a cell-compartment- and tissue-specific manner, which include the plasma membrane-associated cell signaling functions, mitochondrial chaperone, and transcriptional co-regulator of transcription factors and sex steroid hormones in the nucleus. Its function is as follows. In the mitochondria, together with PHB, forms large ring complexes (prohibitin complexes) in the inner mitochondrial membrane (IMM) and functions as a chaperone protein that stabilizes mitochondrial respiratory enzymes and maintains mitochondrial integrity in the IMM, which is required for mitochondrial morphogenesis, neuronal survival, and normal lifespan. The prohibitin complex, with DNAJC19, regulates cardiolipin remodeling and the protein turnover of OMA1 in a cardiolipin-binding manner. Also regulates cytochrome-c oxidase assembly (COX) and mitochondrial respiration. Binding to sphingoid 1-phosphate (SPP) modulates its regulator activity. Has a key role of mitophagy receptor involved in targeting mitochondria for autophagic degradation. Involved in mitochondrial-mediated antiviral innate immunity, activates RIG-I-mediated signal transduction and production of IFNB1 and pro-inflammatory cytokine IL6. Functionally, in the nucleus, serves as transcriptional co-regulator. Acts as a mediator of transcriptional repression by nuclear hormone receptors via recruitment of histone deacetylases. Functions as an estrogen receptor (ER)-selective coregulator that potentiates the inhibitory activities of antiestrogens and represses the activity of estrogens. Competes with NCOA1 for modulation of ER transcriptional activity. In terms of biological role, in the plasma membrane, is involved in IGFBP6-induced cell migration. Cooperates with CD86 to mediate CD86-signaling in B lymphocytes that regulates the level of IgG1 produced through the activation of distal signaling intermediates. Upon CD40 engagement, required to activate NF-kappa-B signaling pathway via phospholipase C and protein kinase C activation. This chain is Prohibitin-2 (PHB2), found in Bos taurus (Bovine).